The following is a 245-amino-acid chain: 2,3-bisphosphoglycerate-dependent phosphoglycerate mutase (245 aa).

Substrate contacts are provided by residues Arg8–Asn15, Thr21–Gly22, Arg60, Glu87–Tyr90, Lys98, Arg114–Arg115, and Gly183–Asn184. Catalysis depends on His9, which acts as the Tele-phosphohistidine intermediate. Catalysis depends on Glu87, which acts as the Proton donor/acceptor.

The protein belongs to the phosphoglycerate mutase family. BPG-dependent PGAM subfamily.

The catalysed reaction is (2R)-2-phosphoglycerate = (2R)-3-phosphoglycerate. It participates in carbohydrate degradation; glycolysis; pyruvate from D-glyceraldehyde 3-phosphate: step 3/5. Catalyzes the interconversion of 2-phosphoglycerate and 3-phosphoglycerate. This Bacillus cereus (strain ZK / E33L) protein is 2,3-bisphosphoglycerate-dependent phosphoglycerate mutase.